Reading from the N-terminus, the 132-residue chain is Large-conductance mechanosensitive channel (132 aa).

3 consecutive transmembrane segments (helical) span residues valine 14 to leucine 34, isoleucine 38 to glycine 58, and glycine 67 to valine 87.

Belongs to the MscL family. As to quaternary structure, homopentamer.

The protein resides in the cell membrane. In terms of biological role, channel that opens in response to stretch forces in the membrane lipid bilayer. May participate in the regulation of osmotic pressure changes within the cell. This chain is Large-conductance mechanosensitive channel, found in Bacillus cereus (strain ATCC 10987 / NRS 248).